A 304-amino-acid chain; its full sequence is tRNA pseudouridine synthase B (304 aa).

Residue Asp40 is the Nucleophile of the active site.

The protein belongs to the pseudouridine synthase TruB family. Type 1 subfamily.

The catalysed reaction is uridine(55) in tRNA = pseudouridine(55) in tRNA. Responsible for synthesis of pseudouridine from uracil-55 in the psi GC loop of transfer RNAs. The protein is tRNA pseudouridine synthase B of Halalkalibacterium halodurans (strain ATCC BAA-125 / DSM 18197 / FERM 7344 / JCM 9153 / C-125) (Bacillus halodurans).